The primary structure comprises 1319 residues: Protein Jumonji (1319 aa).

Positions 1–11 are enriched in basic residues; the sequence is MSKERPKRNII. Disordered regions lie at residues 1-23, 50-130, 173-265, 351-382, 396-478, 499-537, and 549-599; these read MSKERPKRNIIQKKYDDNDGMPW, DGID…PSLP, DEED…NTNG, YSNNHHHNSHHATSNGHGRPQLSHSGKAQSIN, HKMT…KALN, PIQKTGPAPPPSPPAAPASPSMPQNPAIPEPARQRPKRA, and QQRA…RSRA. Polar residues predominate over residues 61–70; that stretch reads ASLSNGQLNG. Residues 74–88 are compositionally biased toward basic and acidic residues; sequence GHKEDGSRSQRKDGG. A Nuclear localization signal motif is present at residues 96 to 102; it reads PAKKRPR. A compositionally biased stretch (basic residues) spans 98–107; it reads KKRPRLHAQR. Over residues 109–121 the composition is skewed to polar residues; it reads FAQSQPNSPSNTP. Acidic residues predominate over residues 173–185; it reads DEEDLEDEDEIEE. The span at 191-200 shows a compositional bias: polar residues; the sequence is VASTSCQSTP. Residues 221 to 251 are compositionally biased toward basic and acidic residues; that stretch reads KDKELTPRSKARESSVGRDRSERCDESEISH. Over residues 372–382 the composition is skewed to polar residues; sequence LSHSGKAQSIN. A compositionally biased stretch (basic and acidic residues) spans 413–424; the sequence is SAREEEVVDRPV. A compositionally biased stretch (pro residues) spans 505–515; the sequence is PAPPPSPPAAP. Low complexity-rich tracts occupy residues 516–525 and 554–570; these read ASPSMPQNPA and TNPTLNRTTSTTSASKS. Residues 583–598 show a composition bias toward basic and acidic residues; that stretch reads RLDRDRERERERERSR. In terms of domain architecture, JmjN spans 607–648; that stretch reads VPIFKPSSREFQDPLVYLDSFREQVESCGLCRVLPPTDWRPE. An ARID domain is found at 671-779; that stretch reads WGPNVQKLAC…FLLSYDLLSP (109 aa). The span at 798 to 811 shows a compositional bias: basic and acidic residues; that stretch reads RKRGPLEGHSDNGH. The tract at residues 798–818 is disordered; it reads RKRGPLEGHSDNGHHSLALPR. Positions 944–948 match the GSGFP motif motif; that stretch reads GSGFP. A JmjC domain is found at 954–1118; it reads PFSKHGWNLT…LGYEAAKDLK (165 aa).

Belongs to the JARID2 family. As to quaternary structure, associates with the PRC2 complex.

Its subcellular location is the nucleus. Functionally, regulator of histone methyltransferase complexes that plays an essential role in embryonic development. Acts by modulating histone methyltransferase activity and promoting the recruitment of histone methyltransferase complexes to their target genes. Binds DNA and mediates the recruitment of the PRC2 complex to target genes in embryonic stem cells. Does not have histone demethylase activity but regulates activity of various histone methyltransferase complexes. In embryonic stem cells, it associates with the PRC2 complex and inhibits trimethylation of 'Lys-27' of histone H3 (H3K27me3) by the PRC2 complex, thereby playing a key role in differentiation of embryonic stem cells and normal development. In Danio rerio (Zebrafish), this protein is Protein Jumonji (jarid2b).